Here is a 139-residue protein sequence, read N- to C-terminus: Nucleoside diphosphate kinase (139 aa).

ATP is bound by residues lysine 11, phenylalanine 59, arginine 87, threonine 93, arginine 104, and asparagine 114. Histidine 117 functions as the Pros-phosphohistidine intermediate in the catalytic mechanism.

This sequence belongs to the NDK family. Homotetramer. The cofactor is Mg(2+).

It localises to the cytoplasm. It catalyses the reaction a 2'-deoxyribonucleoside 5'-diphosphate + ATP = a 2'-deoxyribonucleoside 5'-triphosphate + ADP. The catalysed reaction is a ribonucleoside 5'-diphosphate + ATP = a ribonucleoside 5'-triphosphate + ADP. In terms of biological role, major role in the synthesis of nucleoside triphosphates other than ATP. The ATP gamma phosphate is transferred to the NDP beta phosphate via a ping-pong mechanism, using a phosphorylated active-site intermediate. The protein is Nucleoside diphosphate kinase of Flavobacterium psychrophilum (strain ATCC 49511 / DSM 21280 / CIP 103535 / JIP02/86).